A 234-amino-acid polypeptide reads, in one-letter code: MEKKDMLYEGKAKKIFRTDDKDTVVVYYKDDATAFNGEKKGTIEDKGVMNNSITAMLFELLEKKGVKTHFIEKINEREQLCKKVEIVPLEVIVRNIAAGSMAKRLGLSEGRKLDTTVFEISYKNDDLNDPLINDYHAVAIGLTTFEELKEMYSIAEKVNNTLKEFFDEQGINLVDFKIEIGRFNGELLLADEISPDTCRLWDKSTGEKLDKDRFRRDMGNVKEAYMEILKRVNK.

Belongs to the SAICAR synthetase family.

It catalyses the reaction 5-amino-1-(5-phospho-D-ribosyl)imidazole-4-carboxylate + L-aspartate + ATP = (2S)-2-[5-amino-1-(5-phospho-beta-D-ribosyl)imidazole-4-carboxamido]succinate + ADP + phosphate + 2 H(+). Its pathway is purine metabolism; IMP biosynthesis via de novo pathway; 5-amino-1-(5-phospho-D-ribosyl)imidazole-4-carboxamide from 5-amino-1-(5-phospho-D-ribosyl)imidazole-4-carboxylate: step 1/2. The chain is Phosphoribosylaminoimidazole-succinocarboxamide synthase from Clostridium botulinum (strain ATCC 19397 / Type A).